The primary structure comprises 103 residues: Large ribosomal subunit protein bL21 (103 aa).

This sequence belongs to the bacterial ribosomal protein bL21 family. As to quaternary structure, part of the 50S ribosomal subunit. Contacts protein L20.

In terms of biological role, this protein binds to 23S rRNA in the presence of protein L20. The sequence is that of Large ribosomal subunit protein bL21 from Haemophilus influenzae (strain 86-028NP).